Here is a 1045-residue protein sequence, read N- to C-terminus: Tyrosine-protein kinase-like otk (1045 aa).

Residues 1–25 form the signal peptide; that stretch reads MPIVMDMNMLLMLSLAFTVMAPASA. 5 consecutive Ig-like C2-type domains span residues 26-116, 115-200, 260-373, 376-469, and 474-564; these read SSSR…AKLS, LSVI…RVMS, PEGL…APVN, PGAL…VAIN, and PRFS…VRLL. Over 26–587 the chain is Extracellular; it reads SSSRFTQPPQ…AGDGFLVTRA (562 aa). 4 disulfide bridges follow: cysteine 49/cysteine 97, cysteine 139/cysteine 189, cysteine 285/cysteine 362, and cysteine 406/cysteine 453. N-linked (GlcNAc...) asparagine glycans are attached at residues asparagine 344, asparagine 424, asparagine 435, asparagine 442, asparagine 450, asparagine 463, asparagine 518, and asparagine 530. An intrachain disulfide couples cysteine 496 to cysteine 548. The chain crosses the membrane as a helical span at residues 588 to 608; that stretch reads VLITMTVALAYIVLVVGLMLW. At 609–1045 the chain is on the cytoplasmic side; it reads CRYRRQARKA…LSKAMQAAEK (437 aa). The tract at residues 628–676 is disordered; it reads AGGDQAESGKNTEQEPCLSKQRNGHGKSRTAANGDAQKSDDTACSQQSK. Residue serine 681 is modified to Phosphoserine. In terms of domain architecture, Protein kinase; inactive spans 695–1040; the sequence is LSELIQIGRG…QLGAALSKAM (346 aa). Residues 722-790 form a disordered region; sequence ASPSDKDADT…QPQEQAQSES (69 aa). A compositionally biased stretch (basic and acidic residues) spans 725-736; the sequence is SDKDADTEKQHS. Residues 743 to 752 are compositionally biased toward gly residues; that stretch reads GASGASGCGS. The span at 771-782 shows a compositional bias: acidic residues; sequence DDIEEIKEEEQP.

The protein belongs to the protein kinase superfamily. Tyr protein kinase family. Insulin receptor subfamily. As to quaternary structure, interacts with plexA; component of a receptor complex that mediates the repulsive signaling in response to Semaphorin ligands.

Its subcellular location is the cell membrane. Acts as a calcium-dependent, homophilic cell adhesion molecule that regulates neural recognition during the development of the nervous system. Component of the repulsive Plexin signaling response to regulate motor axon guidance at the embryonic stage. Also component of a receptor complex that is required in the adult visual system to innervate the lamina layer; specific targeting of R1-R6 axons. This is Tyrosine-protein kinase-like otk from Drosophila mojavensis (Fruit fly).